A 200-amino-acid polypeptide reads, in one-letter code: dTTP/UTP pyrophosphatase (200 aa).

The active-site Proton acceptor is D80.

Belongs to the Maf family. YhdE subfamily. A divalent metal cation is required as a cofactor.

The protein resides in the cytoplasm. The catalysed reaction is dTTP + H2O = dTMP + diphosphate + H(+). The enzyme catalyses UTP + H2O = UMP + diphosphate + H(+). Nucleoside triphosphate pyrophosphatase that hydrolyzes dTTP and UTP. May have a dual role in cell division arrest and in preventing the incorporation of modified nucleotides into cellular nucleic acids. The chain is dTTP/UTP pyrophosphatase from Pasteurella multocida (strain Pm70).